We begin with the raw amino-acid sequence, 463 residues long: UDP-N-acetylmuramoylalanine--D-glutamate ligase (463 aa).

109 to 115 is a binding site for ATP; the sequence is GTDGKST.

This sequence belongs to the MurCDEF family.

The protein localises to the cytoplasm. It carries out the reaction UDP-N-acetyl-alpha-D-muramoyl-L-alanine + D-glutamate + ATP = UDP-N-acetyl-alpha-D-muramoyl-L-alanyl-D-glutamate + ADP + phosphate + H(+). The protein operates within cell wall biogenesis; peptidoglycan biosynthesis. Its function is as follows. Cell wall formation. Catalyzes the addition of glutamate to the nucleotide precursor UDP-N-acetylmuramoyl-L-alanine (UMA). In Leptospira interrogans serogroup Icterohaemorrhagiae serovar copenhageni (strain Fiocruz L1-130), this protein is UDP-N-acetylmuramoylalanine--D-glutamate ligase.